A 329-amino-acid polypeptide reads, in one-letter code: Mitochondrial substrate carrier family protein Q (329 aa).

Solcar repeat units lie at residues 18 to 115 (VEAL…LKSI), 125 to 206 (LGTI…LRAL), and 216 to 310 (LGGL…VVIH). Helical transmembrane passes span 21–41 (LGHA…TYPF), 95–115 (LIGI…LKSI), 131–151 (LAIA…IWVV), 175–195 (GFGG…NPSV), 221–241 (VFIL…PYLL), and 298–318 (AFMF…LFYL).

It belongs to the mitochondrial carrier (TC 2.A.29) family.

The protein resides in the peroxisome membrane. In terms of biological role, may have transport activity. The protein is Mitochondrial substrate carrier family protein Q (mcfQ) of Dictyostelium discoideum (Social amoeba).